The primary structure comprises 279 residues: Energy-coupling factor transporter ATP-binding protein EcfA1 (279 aa).

The ABC transporter domain occupies 5–240; sequence ITVNNLFFKY…GNRLISLGLD (236 aa). An ATP-binding site is contributed by 40-47; the sequence is GHNGSGKS.

It belongs to the ABC transporter superfamily. Energy-coupling factor EcfA family. In terms of assembly, forms a stable energy-coupling factor (ECF) transporter complex composed of 2 membrane-embedded substrate-binding proteins (S component), 2 ATP-binding proteins (A component) and 2 transmembrane proteins (T component).

The protein resides in the cell membrane. Functionally, ATP-binding (A) component of a common energy-coupling factor (ECF) ABC-transporter complex. Unlike classic ABC transporters this ECF transporter provides the energy necessary to transport a number of different substrates. This is Energy-coupling factor transporter ATP-binding protein EcfA1 from Streptococcus agalactiae serotype Ia (strain ATCC 27591 / A909 / CDC SS700).